The following is a 333-amino-acid chain: tRNA N6-adenosine threonylcarbamoyltransferase (333 aa).

Residues histidine 111 and histidine 115 each contribute to the Fe cation site. Residues 134 to 138 (LVSGG), aspartate 167, glycine 180, and asparagine 272 each bind substrate. Residue aspartate 300 participates in Fe cation binding.

This sequence belongs to the KAE1 / TsaD family. Requires Fe(2+) as cofactor.

Its subcellular location is the cytoplasm. The catalysed reaction is L-threonylcarbamoyladenylate + adenosine(37) in tRNA = N(6)-L-threonylcarbamoyladenosine(37) in tRNA + AMP + H(+). Its function is as follows. Required for the formation of a threonylcarbamoyl group on adenosine at position 37 (t(6)A37) in tRNAs that read codons beginning with adenine. Is involved in the transfer of the threonylcarbamoyl moiety of threonylcarbamoyl-AMP (TC-AMP) to the N6 group of A37, together with TsaE and TsaB. TsaD likely plays a direct catalytic role in this reaction. The chain is tRNA N6-adenosine threonylcarbamoyltransferase from Legionella pneumophila subsp. pneumophila (strain Philadelphia 1 / ATCC 33152 / DSM 7513).